Here is a 658-residue protein sequence, read N- to C-terminus: UvrABC system protein C (658 aa).

The 79-residue stretch at 62-140 folds into the GIY-YIG domain; that stretch reads PKPGVYRMLD…IKRFRPPYNV (79 aa). One can recognise a UVR domain in the interval 250 to 285; that stretch reads GAVQREIEAQMHKAAEDLDFERAAMLRDRLRAATFI.

Belongs to the UvrC family. Interacts with UvrB in an incision complex.

Its subcellular location is the cytoplasm. Functionally, the UvrABC repair system catalyzes the recognition and processing of DNA lesions. UvrC both incises the 5' and 3' sides of the lesion. The N-terminal half is responsible for the 3' incision and the C-terminal half is responsible for the 5' incision. The chain is UvrABC system protein C from Novosphingobium aromaticivorans (strain ATCC 700278 / DSM 12444 / CCUG 56034 / CIP 105152 / NBRC 16084 / F199).